Reading from the N-terminus, the 35-residue chain is Photosystem II reaction center protein M (35 aa).

The chain crosses the membrane as a helical span at residues 7-27; it reads GFIATILFVLVPTVFLLILYI.

This sequence belongs to the PsbM family. In terms of assembly, PSII is composed of 1 copy each of membrane proteins PsbA, PsbB, PsbC, PsbD, PsbE, PsbF, PsbH, PsbI, PsbJ, PsbK, PsbL, PsbM, PsbT, PsbX, PsbY, PsbZ, Psb30/Ycf12, peripheral proteins PsbO, CyanoQ (PsbQ), PsbU, PsbV and a large number of cofactors. It forms dimeric complexes.

The protein resides in the cellular thylakoid membrane. Its function is as follows. One of the components of the core complex of photosystem II (PSII). PSII is a light-driven water:plastoquinone oxidoreductase that uses light energy to abstract electrons from H(2)O, generating O(2) and a proton gradient subsequently used for ATP formation. It consists of a core antenna complex that captures photons, and an electron transfer chain that converts photonic excitation into a charge separation. This subunit is found at the monomer-monomer interface. This Gloeothece citriformis (strain PCC 7424) (Cyanothece sp. (strain PCC 7424)) protein is Photosystem II reaction center protein M.